A 167-amino-acid polypeptide reads, in one-letter code: Large ribosomal subunit protein uL10 (167 aa).

It belongs to the universal ribosomal protein uL10 family. As to quaternary structure, part of the ribosomal stalk of the 50S ribosomal subunit. The N-terminus interacts with L11 and the large rRNA to form the base of the stalk. The C-terminus forms an elongated spine to which L12 dimers bind in a sequential fashion forming a multimeric L10(L12)X complex.

In terms of biological role, forms part of the ribosomal stalk, playing a central role in the interaction of the ribosome with GTP-bound translation factors. The chain is Large ribosomal subunit protein uL10 from Psychromonas ingrahamii (strain DSM 17664 / CCUG 51855 / 37).